Consider the following 457-residue polypeptide: tRNA modification GTPase MnmE (457 aa).

The (6S)-5-formyl-5,6,7,8-tetrahydrofolate site is built by R22, E83, and R122. Residues 219 to 378 (GLATAIIGRP…LEEAIKTLFF (160 aa)) enclose the TrmE-type G domain. N229 contributes to the K(+) binding site. Residues 229–234 (NVGKSS), 248–254 (TDIAGTT), and 273–276 (DTAG) each bind GTP. S233 contacts Mg(2+). K(+) contacts are provided by T248, I250, and T253. T254 provides a ligand contact to Mg(2+). Position 457 (K457) interacts with (6S)-5-formyl-5,6,7,8-tetrahydrofolate.

The protein belongs to the TRAFAC class TrmE-Era-EngA-EngB-Septin-like GTPase superfamily. TrmE GTPase family. In terms of assembly, homodimer. Heterotetramer of two MnmE and two MnmG subunits. It depends on K(+) as a cofactor.

It is found in the cytoplasm. Exhibits a very high intrinsic GTPase hydrolysis rate. Involved in the addition of a carboxymethylaminomethyl (cmnm) group at the wobble position (U34) of certain tRNAs, forming tRNA-cmnm(5)s(2)U34. The protein is tRNA modification GTPase MnmE of Listeria welshimeri serovar 6b (strain ATCC 35897 / DSM 20650 / CCUG 15529 / CIP 8149 / NCTC 11857 / SLCC 5334 / V8).